The chain runs to 334 residues: Glycerol-3-phosphate dehydrogenase [NAD(P)+] (334 aa).

Positions 11, 12, 32, and 106 each coordinate NADPH. The sn-glycerol 3-phosphate site is built by Lys-106 and Gly-136. NADPH is bound at residue Ala-140. Sn-glycerol 3-phosphate contacts are provided by Lys-191, Asp-244, Ser-254, Arg-255, and Asn-256. Lys-191 (proton acceptor) is an active-site residue. Arg-255 contributes to the NADPH binding site. Residues Val-279 and Glu-281 each coordinate NADPH.

Belongs to the NAD-dependent glycerol-3-phosphate dehydrogenase family.

The protein resides in the cytoplasm. The catalysed reaction is sn-glycerol 3-phosphate + NAD(+) = dihydroxyacetone phosphate + NADH + H(+). The enzyme catalyses sn-glycerol 3-phosphate + NADP(+) = dihydroxyacetone phosphate + NADPH + H(+). It functions in the pathway membrane lipid metabolism; glycerophospholipid metabolism. Its function is as follows. Catalyzes the reduction of the glycolytic intermediate dihydroxyacetone phosphate (DHAP) to sn-glycerol 3-phosphate (G3P), the key precursor for phospholipid synthesis. The chain is Glycerol-3-phosphate dehydrogenase [NAD(P)+] from Parafrankia sp. (strain EAN1pec).